The sequence spans 455 residues: Differentiation-associated protein 1 (455 aa).

The first 21 residues, 1 to 21 (MKFKLFLLVFFVFLLPYLSQS), serve as a signal peptide directing secretion. Positions 349-434 (IGSSSSSSSS…SDDDLGNPSS (86 aa)) are disordered. Residues 351-423 (SSSSSSSSSS…KSNHTSSESS (73 aa)) show a composition bias toward low complexity. S433 carries the GPI-like-anchor amidated serine lipid modification. The propeptide at 434 to 455 (SSSILSVSKLIILLISIILYCF) is removed in mature form.

It localises to the cell membrane. In terms of biological role, plays a role in differentiation. This chain is Differentiation-associated protein 1 (dia1), found in Dictyostelium discoideum (Social amoeba).